The sequence spans 70 residues: DNA-directed RNA polymerase subunit epsilon (70 aa).

This sequence belongs to the RNA polymerase subunit epsilon family. RNAP is composed of a core of 2 alpha, a beta and a beta' subunit. The core is associated with a delta subunit, and at least one of epsilon or omega. When a sigma factor is associated with the core the holoenzyme is formed, which can initiate transcription.

The enzyme catalyses RNA(n) + a ribonucleoside 5'-triphosphate = RNA(n+1) + diphosphate. Its function is as follows. A non-essential component of RNA polymerase (RNAP). In Latilactobacillus sakei subsp. sakei (strain 23K) (Lactobacillus sakei subsp. sakei), this protein is DNA-directed RNA polymerase subunit epsilon.